The sequence spans 1101 residues: Zinc finger SWIM domain-containing protein 4 (1101 aa).

Positions 1–29 (MEPPAAKRSRGCPAGDEPGTGARRSRPEP) are disordered. The SWIM-type zinc finger occupies 134-171 (YHVSISFDRCKITSVSCGCDNRDLFYCAHVVALSLYRI).

The chain is Zinc finger SWIM domain-containing protein 4 (Zswim4) from Mus musculus (Mouse).